Here is a 142-residue protein sequence, read N- to C-terminus: Hemoglobin subunit alpha (142 aa).

Ser-1 is subject to N-acetylserine. The Globin domain maps to 1–142; that stretch reads SLTDKDKATV…VSLALSERYR (142 aa). Position 59 (His-59) interacts with O2. His-88 is a binding site for heme b.

This sequence belongs to the globin family. As to quaternary structure, hb1 is a heterotetramer of two alpha chains and two beta-1 chains. Hb2 is a heterotetramer of two alpha chains and two beta-2 chains. In terms of tissue distribution, red blood cells.

In terms of biological role, involved in oxygen transport from gills to the various peripheral tissues. This is Hemoglobin subunit alpha (hba) from Pseudaphritis urvillii (Congolli).